A 201-amino-acid chain; its full sequence is Ras-like GTP-binding protein YPT1 (201 aa).

GTP is bound by residues G15–C23, Y33–T40, D63–Q67, N121–D124, and S151–K153. An Effector region motif is present at residues Y37–F45. Residues C200 and C201 are each lipidated (S-geranylgeranyl cysteine).

Belongs to the small GTPase superfamily. Rab family.

The protein localises to the endoplasmic reticulum membrane. Its subcellular location is the golgi apparatus membrane. The protein resides in the cytoplasm. It localises to the preautophagosomal structure membrane. Its activity is regulated as follows. Rab activation is generally mediated by a guanine exchange factor (GEF), while inactivation through hydrolysis of bound GTP is catalyzed by a GTPase activating protein (GAP). Functionally, the small GTPases Rab are key regulators of intracellular membrane trafficking, from the formation of transport vesicles to their fusion with membranes. Rabs cycle between an inactive GDP-bound form and an active GTP-bound form that is able to recruit to membranes different set of downstream effectors directly responsible for vesicle formation, movement, tethering and fusion. YPT1 regulates the trafficking of secretory vesicles from the endoplasmic reticulum (ER) to the Golgi. Plays a role in the initial events of the autophagic vacuole development which take place at specialized regions of the endoplasmic reticulum. Also involved in the recycling of membrane proteins. This is Ras-like GTP-binding protein YPT1 (YPT1) from Phytophthora infestans (Potato late blight agent).